The following is a 538-amino-acid chain: Nicotinate phosphoribosyltransferase (538 aa).

Positions 21 and 210 each coordinate nicotinate. A Phosphohistidine modification is found at H213. R318 is a nicotinate binding site. T380 serves as a coordination point for 5-phospho-alpha-D-ribose 1-diphosphate. S537 carries the phosphoserine modification.

It belongs to the NAPRTase family. As to quaternary structure, homodimer. It depends on Mg(2+) as a cofactor. Mn(2+) is required as a cofactor. In terms of processing, transiently phosphorylated on a His residue during the reaction cycle. Phosphorylation strongly increases the affinity for substrates and increases the rate of nicotinate D-ribonucleotide production. Dephosphorylation regenerates the low-affinity form of the enzyme, leading to product release.

It is found in the cytoplasm. The protein localises to the cytosol. The catalysed reaction is nicotinate + 5-phospho-alpha-D-ribose 1-diphosphate + ATP + H2O = nicotinate beta-D-ribonucleotide + ADP + phosphate + diphosphate. The protein operates within cofactor biosynthesis; NAD(+) biosynthesis; nicotinate D-ribonucleotide from nicotinate: step 1/1. Its function is as follows. Catalyzes the first step in the biosynthesis of NAD from nicotinic acid, the ATP-dependent synthesis of beta-nicotinate D-ribonucleotide from nicotinate and 5-phospho-D-ribose 1-phosphate. Helps prevent cellular oxidative stress via its role in NAD biosynthesis. This is Nicotinate phosphoribosyltransferase (NAPRT) from Homo sapiens (Human).